The primary structure comprises 498 residues: N-succinylglutamate 5-semialdehyde dehydrogenase 1 (498 aa).

231–236 (GSSNTG) provides a ligand contact to NAD(+). Catalysis depends on residues glutamate 254 and cysteine 288.

This sequence belongs to the aldehyde dehydrogenase family. AstD subfamily.

It carries out the reaction N-succinyl-L-glutamate 5-semialdehyde + NAD(+) + H2O = N-succinyl-L-glutamate + NADH + 2 H(+). It functions in the pathway amino-acid degradation; L-arginine degradation via AST pathway; L-glutamate and succinate from L-arginine: step 4/5. Catalyzes the NAD-dependent reduction of succinylglutamate semialdehyde into succinylglutamate. The sequence is that of N-succinylglutamate 5-semialdehyde dehydrogenase 1 from Shewanella denitrificans (strain OS217 / ATCC BAA-1090 / DSM 15013).